We begin with the raw amino-acid sequence, 403 residues long: Aspartate aminotransferase, cytoplasmic isozyme 2 (403 aa).

The residue at position 1 (methionine 1) is an N-acetylmethionine. Residues glycine 37, tryptophan 132, and asparagine 185 each contribute to the L-aspartate site. At lysine 249 the chain carries N6-(pyridoxal phosphate)lysine. L-aspartate is bound at residue arginine 377.

The protein belongs to the class-I pyridoxal-phosphate-dependent aminotransferase family. Homodimer. Requires pyridoxal 5'-phosphate as cofactor.

The protein resides in the cytoplasm. The catalysed reaction is L-aspartate + 2-oxoglutarate = oxaloacetate + L-glutamate. Its function is as follows. Important for the metabolism of amino acids and Krebs-cycle related organic acids. In plants, it is involved in nitrogen metabolism and in aspects of carbon and energy metabolism. In Arabidopsis thaliana (Mouse-ear cress), this protein is Aspartate aminotransferase, cytoplasmic isozyme 2 (ASP4).